Consider the following 1134-residue polypeptide: TBC1 domain family member 8 (1134 aa).

GRAM domains lie at 145–212 and 285–353; these read VKFE…ERTS and EFFR…EKME. The interval 433–466 is disordered; the sequence is ASQSSEEREEKRPLPHPEPLTAVFQQSGSQSPDS. Residues 437–447 are compositionally biased toward basic and acidic residues; sequence SEEREEKRPLP. The segment covering 455-466 has biased composition (polar residues); that stretch reads VFQQSGSQSPDS. In terms of domain architecture, Rab-GAP TBC spans 504–691; sequence GIPESLRGRL…HVVDCFFYDG (188 aa). The interval 1034 to 1070 is disordered; it reads SSSGSCSQECEEPQASAPPEQDSVFAEAGKSPQAFPE.

May act as a GTPase-activating protein for Rab family protein(s). The chain is TBC1 domain family member 8 (Tbc1d8) from Mus musculus (Mouse).